The following is a 171-amino-acid chain: Small ribosomal subunit protein uS5 (171 aa).

The region spanning 13–76 is the S5 DRBM domain; the sequence is FLERLVAVNR…DQAKKNLVTI (64 aa).

Belongs to the universal ribosomal protein uS5 family. In terms of assembly, part of the 30S ribosomal subunit. Contacts proteins S4 and S8.

With S4 and S12 plays an important role in translational accuracy. Its function is as follows. Located at the back of the 30S subunit body where it stabilizes the conformation of the head with respect to the body. The chain is Small ribosomal subunit protein uS5 from Dichelobacter nodosus (strain VCS1703A).